We begin with the raw amino-acid sequence, 178 residues long: Small ribosomal subunit protein uS4 (178 aa).

An S4 RNA-binding domain is found at 104–166; that stretch reads RRLQTIVYRK…PNSPMASENH (63 aa). The segment at 158–178 is disordered; that stretch reads NSPMASENHPERTAAVSEENQ.

Belongs to the universal ribosomal protein uS4 family. Part of the 30S ribosomal subunit. Contacts protein S5. The interaction surface between S4 and S5 is involved in control of translational fidelity.

One of the primary rRNA binding proteins, it binds directly to 16S rRNA where it nucleates assembly of the body of the 30S subunit. Functionally, with S5 and S12 plays an important role in translational accuracy. In Methanococcus maripaludis (strain C6 / ATCC BAA-1332), this protein is Small ribosomal subunit protein uS4.